Here is a 275-residue protein sequence, read N- to C-terminus: Small ribosomal subunit protein uS2 (275 aa).

A disordered region spans residues 226–275 (AAAPNSASVREEEFSAEAGDEGKGRRAPAKKATEKKADAPAAAPEAPAAE). The span at 264-275 (APAAAPEAPAAE) shows a compositional bias: low complexity.

This sequence belongs to the universal ribosomal protein uS2 family.

This chain is Small ribosomal subunit protein uS2, found in Xanthomonas campestris pv. campestris (strain ATCC 33913 / DSM 3586 / NCPPB 528 / LMG 568 / P 25).